Here is a 182-residue protein sequence, read N- to C-terminus: Large ribosomal subunit protein uL6 (182 aa).

The protein belongs to the universal ribosomal protein uL6 family. In terms of assembly, part of the 50S ribosomal subunit.

In terms of biological role, this protein binds to the 23S rRNA, and is important in its secondary structure. It is located near the subunit interface in the base of the L7/L12 stalk, and near the tRNA binding site of the peptidyltransferase center. The protein is Large ribosomal subunit protein uL6 of Desulforamulus reducens (strain ATCC BAA-1160 / DSM 100696 / MI-1) (Desulfotomaculum reducens).